Reading from the N-terminus, the 185-residue chain is Ribosome-recycling factor (185 aa).

The protein belongs to the RRF family.

The protein localises to the cytoplasm. Functionally, responsible for the release of ribosomes from messenger RNA at the termination of protein biosynthesis. May increase the efficiency of translation by recycling ribosomes from one round of translation to another. This chain is Ribosome-recycling factor, found in Teredinibacter turnerae (strain ATCC 39867 / T7901).